The chain runs to 90 residues: Probable Fe(2+)-trafficking protein (90 aa).

This sequence belongs to the Fe(2+)-trafficking protein family. As to quaternary structure, monomer.

In terms of biological role, could be a mediator in iron transactions between iron acquisition and iron-requiring processes, such as synthesis and/or repair of Fe-S clusters in biosynthetic enzymes. This is Probable Fe(2+)-trafficking protein from Sodalis glossinidius (strain morsitans).